The chain runs to 213 residues: Protein big brother (213 aa).

Belongs to the CBF-beta family.

It localises to the nucleus. Its function is as follows. Regulates the DNA-binding properties of Runt. This Drosophila melanogaster (Fruit fly) protein is Protein big brother (Bgb).